A 432-amino-acid chain; its full sequence is Amino-acid acetyltransferase (432 aa).

Residues glutamate 286 to serine 425 enclose the N-acetyltransferase domain.

It belongs to the acetyltransferase family. ArgA subfamily.

It is found in the cytoplasm. It catalyses the reaction L-glutamate + acetyl-CoA = N-acetyl-L-glutamate + CoA + H(+). It participates in amino-acid biosynthesis; L-arginine biosynthesis; N(2)-acetyl-L-ornithine from L-glutamate: step 1/4. In Pseudomonas putida (strain GB-1), this protein is Amino-acid acetyltransferase.